We begin with the raw amino-acid sequence, 307 residues long: Glycine--tRNA ligase alpha subunit (307 aa).

Belongs to the class-II aminoacyl-tRNA synthetase family. Tetramer of two alpha and two beta subunits.

The protein localises to the cytoplasm. It carries out the reaction tRNA(Gly) + glycine + ATP = glycyl-tRNA(Gly) + AMP + diphosphate. In Xylella fastidiosa (strain 9a5c), this protein is Glycine--tRNA ligase alpha subunit (glyQ).